A 220-amino-acid polypeptide reads, in one-letter code: Kinetochore protein Spc25 (220 aa).

Residues 79–114 (HLTQEVEAIKLRNLAMKDQIKQQKMLNNQRKNEIME) are a coiled coil.

Belongs to the SPC25 family. As to quaternary structure, component of the Ndc80 complex, which is composed of Ndc80, Nuf2 and Spc25.

The protein localises to the nucleus. Its subcellular location is the chromosome. It is found in the centromere. The protein resides in the kinetochore. In terms of biological role, acts as a component of the essential kinetochore-associated Ndc80 complex, which is required for chromosome segregation and spindle checkpoint activity during meiosis and mitosis. Required for kinetochore integrity and the organization of stable microtubule binding sites in the outer plate of the kinetochore. Participates in SAC signaling that responds specifically to disruptions in spindle microtubule dynamics. The NDC80 complex synergistically enhances the affinity of the SKA1 complex for microtubules and may allow the NDC80 complex to track depolymerizing microtubules. In Drosophila orena (Fruit fly), this protein is Kinetochore protein Spc25.